The sequence spans 845 residues: Complement component C7 (845 aa).

An N-terminal signal peptide occupies residues Met-1–Ala-22. In terms of domain architecture, TSP type-1 1 spans Asn-27–Pro-80. 6 disulfides stabilise this stretch: Cys-28-Cys-63, Cys-39-Cys-73, Cys-42-Cys-79, Cys-85-Cys-96, Cys-91-Cys-109, and Cys-103-Cys-119. Positions Gly-84–Glu-120 constitute an LDL-receptor class A domain. Residues Val-122–His-456 form the MACPF domain. N-linked (GlcNAc...) asparagine glycosylation occurs at Asn-124. Cysteines 127 and 164 form a disulfide. An N-linked (GlcNAc...) asparagine glycan is attached at Asn-201. Intrachain disulfides connect Cys-336–Cys-353, Cys-433–Cys-560, Cys-455–Cys-505, Cys-457–Cys-473, Cys-460–Cys-475, Cys-477–Cys-486, Cys-512–Cys-545, Cys-523–Cys-535, Cys-571–Cys-613, Cys-599–Cys-626, Cys-631–Cys-673, Cys-659–Cys-688, Cys-703–Cys-714, Cys-716–Cys-751, Cys-722–Cys-744, Cys-729–Cys-764, Cys-774–Cys-783, Cys-777–Cys-790, Cys-792–Cys-826, Cys-798–Cys-819, and Cys-806–Cys-839. The 31-residue stretch at Cys-457–Glu-487 folds into the EGF-like domain. The TSP type-1 2 domain maps to Asp-500–Asp-549. CCP stretches follow at residues Cys-545–Glu-615 and Asp-616–Thr-693. 2 Sushi domains span residues Glu-569–Lys-628 and Leu-629–Gln-690. Factor I module (FIM) regions lie at residues Thr-695–Glu-771 and Lys-772–Ala-844. A glycan (N-linked (GlcNAc...) asparagine) is linked at Asn-755.

The protein belongs to the complement C6/C7/C8/C9 family. As to quaternary structure, monomer or dimer; as a C5b-7 complex it can also form multimeric rosettes. Component of the membrane attack complex (MAC), composed of complement C5b, C6, C7, C8A, C8B, C8G and multiple copies of the pore-forming subunit C9. Post-translationally, C-, N- and O-glycosylated. O-glycosylated with core 1 or possibly core 8 glycans.

Its subcellular location is the secreted. The protein resides in the target cell membrane. With respect to regulation, membrane attack complex (MAC) assembly is inhibited by CD59, thereby protecting self-cells from damage during complement activation. MAC assembly is also inhibited by clusterin (CLU) chaperones that inhibit polymerization of C9. Its function is as follows. Component of the membrane attack complex (MAC), a multiprotein complex activated by the complement cascade, which inserts into a target cell membrane and forms a pore, leading to target cell membrane rupture and cell lysis. The MAC is initiated by proteolytic cleavage of C5 into complement C5b in response to the classical, alternative, lectin and GZMK complement pathways. The complement pathways consist in a cascade of proteins that leads to phagocytosis and breakdown of pathogens and signaling that strengthens the adaptive immune system. C7 serves as a membrane anchor. During MAC assembly, associates with C5b and C6 to form the C5b-7 complex, a key lipophilic precursor of the MAC complex, which associates with the outer leaflet and reduces the energy for membrane bending. This Mus musculus (Mouse) protein is Complement component C7.